We begin with the raw amino-acid sequence, 235 residues long: MNHSAGTFPPVIAVLPAAGIGSRMQADCPKQYLTIGHQTILEHAIHALLRHPRIPQVIVAIGPDDQQFHQLPIAKDPRVRVTVGGQQRADSVMAGLQLAGEAKWVLVHDAARPCLHAEDLERLLAITEHSEVGGILAAPVRDTMKRAEPGRSTISHTVERQDLWHALTPQLFPLALLKLCLQRAMDDGATVTDEASALEHCGYHPLLVSGRSDNIKVTRPEDLALAAFYLTQLDN.

This sequence belongs to the IspD/TarI cytidylyltransferase family. IspD subfamily. In terms of assembly, homodimer.

The enzyme catalyses 2-C-methyl-D-erythritol 4-phosphate + CTP + H(+) = 4-CDP-2-C-methyl-D-erythritol + diphosphate. It participates in isoprenoid biosynthesis; isopentenyl diphosphate biosynthesis via DXP pathway; isopentenyl diphosphate from 1-deoxy-D-xylulose 5-phosphate: step 2/6. Its function is as follows. Catalyzes the formation of 4-diphosphocytidyl-2-C-methyl-D-erythritol from CTP and 2-C-methyl-D-erythritol 4-phosphate (MEP). This is 2-C-methyl-D-erythritol 4-phosphate cytidylyltransferase from Serratia proteamaculans (strain 568).